We begin with the raw amino-acid sequence, 395 residues long: S-adenosylmethionine synthase (395 aa).

Histidine 18 is an ATP binding site. Aspartate 20 contributes to the Mg(2+) binding site. Glutamate 46 lines the K(+) pocket. L-methionine-binding residues include glutamate 59 and glutamine 103. The tract at residues glutamine 103–serine 113 is flexible loop. Residues aspartate 170–lysine 172, aspartate 244, arginine 250–lysine 251, alanine 267, and lysine 271 contribute to the ATP site. Aspartate 244 contributes to the L-methionine binding site. Lysine 275 provides a ligand contact to L-methionine.

Belongs to the AdoMet synthase family. As to quaternary structure, homotetramer; dimer of dimers. Mg(2+) is required as a cofactor. The cofactor is K(+).

The protein resides in the cytoplasm. It catalyses the reaction L-methionine + ATP + H2O = S-adenosyl-L-methionine + phosphate + diphosphate. It functions in the pathway amino-acid biosynthesis; S-adenosyl-L-methionine biosynthesis; S-adenosyl-L-methionine from L-methionine: step 1/1. In terms of biological role, catalyzes the formation of S-adenosylmethionine (AdoMet) from methionine and ATP. The overall synthetic reaction is composed of two sequential steps, AdoMet formation and the subsequent tripolyphosphate hydrolysis which occurs prior to release of AdoMet from the enzyme. The polypeptide is S-adenosylmethionine synthase (Gluconacetobacter diazotrophicus (strain ATCC 49037 / DSM 5601 / CCUG 37298 / CIP 103539 / LMG 7603 / PAl5)).